Here is a 706-residue protein sequence, read N- to C-terminus: Integrator complex subunit 13 (706 aa).

Positions 564 to 603 (PPEEEERKKRGRKREDKEDKSEKAVKDYEQEKSWQDSERL) are disordered. The stretch at 567-622 (EEERKKRGRKREDKEDKSEKAVKDYEQEKSWQDSERLKGILERGKEELAEAEIIKD) forms a coiled coil. The short motif at 572 to 582 (KRGRKREDKED) is the Nuclear localization signal (NLS) element. Lys611 participates in a covalent cross-link: Glycyl lysine isopeptide (Lys-Gly) (interchain with G-Cter in SUMO2). Basic and acidic residues predominate over residues 615–636 (AEAEIIKDSPDSPEPPNKKPLV). Residues 615-650 (AEAEIIKDSPDSPEPPNKKPLVEMDETPQVEKSKGP) form a disordered region. Residues Ser623, Ser626, and Ser678 each carry the phosphoserine modification. The tract at residues 649-694 (GPVSLLSLWSNRINTANSRKHQEFAGRLNSVNNRAELYQHLKEENG) is cleavage module binding motif (CMBM).

It belongs to the Integrator subunit 13 family. As to quaternary structure, component of the Integrator complex, composed of core subunits INTS1, INTS2, INTS3, INTS4, INTS5, INTS6, INTS7, INTS8, INTS9/RC74, INTS10, INTS11/CPSF3L, INTS12, INTS13, INTS14 and INTS15. The core complex associates with protein phosphatase 2A subunits PPP2CA and PPP2R1A, to form the Integrator-PP2A (INTAC) complex. INTS13 is part of the tail subcomplex, composed of INTS10, INTS13, INTS14 and INTS15. Interacts with transcription factors ZNF609 and ZNF655. Interacts with PAFAH1B1; this interaction may be required for proper recruitment of dynein complexes to the nuclear envelope at prophase. As to expression, widely expressed. Tends to be up-regulated in seminomas compared to normal testis.

The protein resides in the nucleus. It is found in the cytoplasm. Component of the integrator complex, a multiprotein complex that terminates RNA polymerase II (Pol II) transcription in the promoter-proximal region of genes. The integrator complex provides a quality checkpoint during transcription elongation by driving premature transcription termination of transcripts that are unfavorably configured for transcriptional elongation: the complex terminates transcription by (1) catalyzing dephosphorylation of the C-terminal domain (CTD) of Pol II subunit POLR2A/RPB1 and SUPT5H/SPT5, (2) degrading the exiting nascent RNA transcript via endonuclease activity and (3) promoting the release of Pol II from bound DNA. The integrator complex is also involved in terminating the synthesis of non-coding Pol II transcripts, such as enhancer RNAs (eRNAs), small nuclear RNAs (snRNAs), telomerase RNAs and long non-coding RNAs (lncRNAs). Within the integrator complex, INTS13 is part of the integrator tail module and acts as a platform for the recruitment of transcription factors at promoters. At prophase, mediates recruitment of cytoplasmic dynein to the nuclear envelope, a step important for proper centrosome-nucleus coupling. At G2/M phase, may be required for proper spindle formation and execution of cytokinesis. The chain is Integrator complex subunit 13 from Homo sapiens (Human).